Reading from the N-terminus, the 256-residue chain is Ribosomal RNA small subunit methyltransferase A (256 aa).

6 residues coordinate S-adenosyl-L-methionine: histidine 12, leucine 14, glycine 39, glutamate 60, aspartate 83, and asparagine 101.

It belongs to the class I-like SAM-binding methyltransferase superfamily. rRNA adenine N(6)-methyltransferase family. RsmA subfamily.

The protein resides in the cytoplasm. The catalysed reaction is adenosine(1518)/adenosine(1519) in 16S rRNA + 4 S-adenosyl-L-methionine = N(6)-dimethyladenosine(1518)/N(6)-dimethyladenosine(1519) in 16S rRNA + 4 S-adenosyl-L-homocysteine + 4 H(+). Specifically dimethylates two adjacent adenosines (A1518 and A1519) in the loop of a conserved hairpin near the 3'-end of 16S rRNA in the 30S particle. May play a critical role in biogenesis of 30S subunits. The polypeptide is Ribosomal RNA small subunit methyltransferase A (Nitrosomonas eutropha (strain DSM 101675 / C91 / Nm57)).